Reading from the N-terminus, the 460-residue chain is Citrate synthase, peroxisomal (460 aa).

Ser-21 is modified (phosphoserine). Residues Lys-218 and Lys-239 each participate in a glycyl lysine isopeptide (Lys-Gly) (interchain with G-Cter in ubiquitin) cross-link. Catalysis depends on residues His-293 and His-339. Glycyl lysine isopeptide (Lys-Gly) (interchain with G-Cter in ubiquitin) cross-links involve residues Lys-354 and Lys-385. Residue Asp-394 is part of the active site. Residues 458-460 (SKL) carry the C-terminal peroxisome targeting signal (PTS1) motif.

This sequence belongs to the citrate synthase family. Interacts with F-box protein UCC1. Post-translationally, ubiquitinated by the E3 ubiquitin-protein ligase complex SCF(UCC1), which leads to its degradation by the proteasome. Ubiquitination is prevented by oxaloacetate, suggesting the existence of an oxaloacetate-dependent positive feedback loop that stabilizes CIT2.

It is found in the cytoplasm. Its subcellular location is the peroxisome. The catalysed reaction is oxaloacetate + acetyl-CoA + H2O = citrate + CoA + H(+). The protein operates within carbohydrate metabolism; tricarboxylic acid cycle; isocitrate from oxaloacetate: step 1/2. Peroxisomal citrate synthase involved in the citrate homeostasis. Catalyzes the condensation of acetyl coenzyme A and oxaloacetate to form citrate. Citrate synthase is the rate-limiting enzyme of the tricarboxylic acid (TCA) cycle. The sequence is that of Citrate synthase, peroxisomal from Saccharomyces cerevisiae (strain ATCC 204508 / S288c) (Baker's yeast).